The chain runs to 621 residues: uncharacterized protein (621 aa).

3 consecutive transmembrane segments (helical) span residues 240–260, 548–568, and 587–607; these read FFDAFFVILLLICHLNNNLLW, LGIVTAVVFGIIEFFNCVWTV, and VIIGIGTILVLTLLITILTFM.

The protein localises to the cell membrane. This is an uncharacterized protein from Mycoplasma pneumoniae (strain ATCC 29342 / M129 / Subtype 1) (Mycoplasmoides pneumoniae).